Consider the following 33-residue polypeptide: Photosystem II reaction center protein T (33 aa).

Residues 3-23 (ALVYTFLLVSTLGILFFSIFF) traverse the membrane as a helical segment.

It belongs to the PsbT family. As to quaternary structure, PSII is composed of 1 copy each of membrane proteins PsbA, PsbB, PsbC, PsbD, PsbE, PsbF, PsbH, PsbI, PsbJ, PsbK, PsbL, PsbM, PsbT, PsbY, PsbZ, Psb30/Ycf12, at least 3 peripheral proteins of the oxygen-evolving complex and a large number of cofactors. It forms dimeric complexes.

The protein localises to the plastid. Its subcellular location is the chloroplast thylakoid membrane. Found at the monomer-monomer interface of the photosystem II (PS II) dimer, plays a role in assembly and dimerization of PSII. PSII is a light-driven water plastoquinone oxidoreductase, using light energy to abstract electrons from H(2)O, generating a proton gradient subsequently used for ATP formation. In Pelargonium hortorum (Common geranium), this protein is Photosystem II reaction center protein T.